A 471-amino-acid chain; its full sequence is A-type ATP synthase subunit B (471 aa).

Belongs to the ATPase alpha/beta chains family. As to quaternary structure, has multiple subunits with at least A(3), B(3), C, D, E, F, H, I and proteolipid K(x).

It localises to the cell membrane. In terms of biological role, component of the A-type ATP synthase that produces ATP from ADP in the presence of a proton gradient across the membrane. The B chain is a regulatory subunit. The polypeptide is A-type ATP synthase subunit B (Halobacterium salinarum (strain ATCC 29341 / DSM 671 / R1)).